A 106-amino-acid polypeptide reads, in one-letter code: MARKIKKGDTVKVLSGKDKGKTGEVVTVIPKEDKVVVRGVNIVKRHQRPNAQMRQGGIIEKEAPIYVCKVALVCPSCGQATRVGFRFLDDGRKVRYCKKCGEVIDK.

It belongs to the universal ribosomal protein uL24 family. In terms of assembly, part of the 50S ribosomal subunit.

One of two assembly initiator proteins, it binds directly to the 5'-end of the 23S rRNA, where it nucleates assembly of the 50S subunit. Its function is as follows. One of the proteins that surrounds the polypeptide exit tunnel on the outside of the subunit. The chain is Large ribosomal subunit protein uL24 from Thermosipho melanesiensis (strain DSM 12029 / CIP 104789 / BI429).